Here is a 776-residue protein sequence, read N- to C-terminus: MRILVTAALPYSNGPIHLGHIAGAYLPADIFYRFVKLKGYNALYICGSDQYGSPIELNAIKLNIDPKDYASFYRKIQEEIFKKFNIKFDIYSGTAESNIHPIIVKEFFLSLFSAGLLIEKEQELPYDPKIKRFLPDRFVVGQCPYCGYEKAYGDQCEKCGRLLEPKELINPKSAITGEKVIFKKTRHLFFNIPKLKDKLKQYIESKKDVWNDFTYSWSLALLDNFKERAITRDNKWGVKVPAKEMLEILKKALKEGKTPKDFGLLIDSTNEKDLENHIKEYENKVLYVWFDAPIGYISFTFETSPEYRYYWDEKEKPYIVHFIGKDNIPFHTIFWPALIIGRNLGYKNINHILDFDIALPYQVFGNPYLNYYGKKFSKSKRWGVFLDNIDKIDIDIDYFRFYLAYIHTVSKDMSFEWDQFKEVINKELVDNIGNFIHRVLTFIYNRFNGIPPKIEHLDDKDKELLDKIKQLPEKVFNFIWKGEIGNALREIVNTSNLANKYFQEKEPWKTNDPNTIAIAFEAVKTFIILLYPFIPEKAKLLASIANIDIKWDFNQKVEKINKPFIVFHKLSDNQIEMAKQILTNPKEYDLGKKKVIGVLRYEDELYKIELECDDNPWVCLKRELDKRKIKYIYDTVKGDVPPHIIDGNTYIYLLPALEKPNLEKAEEEYGLVSYLDFAKLDMRVGKIIDVQDHPNADKLYIIKVSLGNKQKTLVGGLKQYYKKEELIGKYVVLINNLKPKQLRGITSEGMLLAADDGKEVALLMPDKPISLGSKVR.

The 'HIGH' region signature appears at Pro-10–His-20. Zn(2+) contacts are provided by Cys-143, Cys-146, Cys-156, and Cys-159. Positions Lys-375–Ser-379 match the 'KMSKS' region motif. Lys-378 contributes to the ATP binding site. The tRNA-binding domain occupies Asp-676 to Arg-776.

It belongs to the class-I aminoacyl-tRNA synthetase family. MetG type 1 subfamily. Homodimer. Zn(2+) is required as a cofactor.

The protein resides in the cytoplasm. It carries out the reaction tRNA(Met) + L-methionine + ATP = L-methionyl-tRNA(Met) + AMP + diphosphate. In terms of biological role, is required not only for elongation of protein synthesis but also for the initiation of all mRNA translation through initiator tRNA(fMet) aminoacylation. The protein is Methionine--tRNA ligase (metG) of Nanoarchaeum equitans (strain Kin4-M).